The sequence spans 465 residues: GTPase Der (465 aa).

EngA-type G domains follow at residues 3-167 (PLVA…PEEG) and 179-352 (IRIA…ESAN). Residues 9–16 (GRPNVGKS), 57–61 (DTGGI), 119–122 (NKID), 185–192 (GRPNVGKS), 232–236 (DTAGL), and 297–300 (NKWD) contribute to the GTP site. Residues 353 to 437 (KTFTTSEVNK…PVSFIFREGT (85 aa)) enclose the KH-like domain.

The protein belongs to the TRAFAC class TrmE-Era-EngA-EngB-Septin-like GTPase superfamily. EngA (Der) GTPase family. Associates with the 50S ribosomal subunit.

GTPase that plays an essential role in the late steps of ribosome biogenesis. The protein is GTPase Der of Stenotrophomonas maltophilia (strain K279a).